The following is a 146-amino-acid chain: uncharacterized protein (146 aa).

The Glutaredoxin domain maps to 34–135 (EDKIVNDVMT…PLLEKAHALF (102 aa)). Residue C54 coordinates [2Fe-2S] cluster.

The protein belongs to the glutaredoxin family. Monothiol subfamily.

This is an uncharacterized protein from Caenorhabditis elegans.